The primary structure comprises 140 residues: Phospholipase A2 (140 aa).

A signal peptide spans 1–21; the sequence is MNPAHLLVLAAVCISLSGASS. A propeptide spanning residues 22-27 is cleaved from the precursor; the sequence is IAPQPL. 7 cysteine pairs are disulfide-bonded: cysteine 38/cysteine 97, cysteine 52/cysteine 139, cysteine 54/cysteine 70, cysteine 69/cysteine 125, cysteine 76/cysteine 118, cysteine 86/cysteine 111, and cysteine 104/cysteine 116. Asparagine 39 carries an N-linked (GlcNAc...) asparagine glycan. Tyrosine 53, glycine 55, and glycine 57 together coordinate Ca(2+). Histidine 73 is an active-site residue. Aspartate 74 lines the Ca(2+) pocket. The N-linked (GlcNAc...) asparagine glycan is linked to asparagine 107. Residue aspartate 119 is part of the active site.

This sequence belongs to the phospholipase A2 family. Group I subfamily. D49 sub-subfamily. Ca(2+) is required as a cofactor. In terms of tissue distribution, expressed by the venom gland.

Its subcellular location is the secreted. The enzyme catalyses a 1,2-diacyl-sn-glycero-3-phosphocholine + H2O = a 1-acyl-sn-glycero-3-phosphocholine + a fatty acid + H(+). Functionally, PLA2 catalyzes the calcium-dependent hydrolysis of the 2-acyl groups in 3-sn-phosphoglycerides. This is Phospholipase A2 from Micrurus altirostris (Uruguayan coral snake).